A 477-amino-acid chain; its full sequence is Glycogen synthase (477 aa).

Lys15 contributes to the ADP-alpha-D-glucose binding site.

The protein belongs to the glycosyltransferase 1 family. Bacterial/plant glycogen synthase subfamily.

It carries out the reaction [(1-&gt;4)-alpha-D-glucosyl](n) + ADP-alpha-D-glucose = [(1-&gt;4)-alpha-D-glucosyl](n+1) + ADP + H(+). It functions in the pathway glycan biosynthesis; glycogen biosynthesis. Its function is as follows. Synthesizes alpha-1,4-glucan chains using ADP-glucose. The sequence is that of Glycogen synthase from Glaesserella parasuis serovar 5 (strain SH0165) (Haemophilus parasuis).